We begin with the raw amino-acid sequence, 157 residues long: Transcription elongation factor GreA (157 aa).

Residues 9–30 adopt a coiled-coil conformation; it reads LEGAQQLKEELKRRKTTDRKRI.

It belongs to the GreA/GreB family.

Necessary for efficient RNA polymerase transcription elongation past template-encoded arresting sites. The arresting sites in DNA have the property of trapping a certain fraction of elongating RNA polymerases that pass through, resulting in locked ternary complexes. Cleavage of the nascent transcript by cleavage factors such as GreA or GreB allows the resumption of elongation from the new 3'terminus. GreA releases sequences of 2 to 3 nucleotides. The polypeptide is Transcription elongation factor GreA (Magnetococcus marinus (strain ATCC BAA-1437 / JCM 17883 / MC-1)).